A 310-amino-acid chain; its full sequence is MKVAVLGAAGGIGQALSLLLKTQLPAGSELSLYDVAPVVPGVAVDLSHIPTDVKVTGFGKDDLASALVGSDIVLIPAGVPRKPGMDRSDLFNMNAGIVKNLVQGVADNCPNACVGIITNPVNTTVPIAAEVLKKAGCYDKRKLFGVTTLDVIRSEAFVGELRGLNPENVNVPVIGGHSGTTILPLLSQVEGVEFTEQEIKDLTHRIQNAGTEVVEAKAGGGSATLSMGQAAARFALSLLKGLQGQDTIECTYVEGPGDNAKFFAQPVRLGKNGAEEILSYGKLSAFEQKCMDEMLDGLKGDIQTGIDFAS.

Residues 7 to 13 (GAAGGIG) and D34 each bind NAD(+). Residues R81 and R87 each contribute to the substrate site. Residues N94 and 117–119 (ITN) each bind NAD(+). 2 residues coordinate substrate: N119 and R153. H177 serves as the catalytic Proton acceptor. M227 is a binding site for NAD(+).

The protein belongs to the LDH/MDH superfamily. MDH type 1 family. In terms of assembly, homodimer.

It carries out the reaction (S)-malate + NAD(+) = oxaloacetate + NADH + H(+). Its function is as follows. Catalyzes the reversible oxidation of malate to oxaloacetate. In Idiomarina loihiensis (strain ATCC BAA-735 / DSM 15497 / L2-TR), this protein is Malate dehydrogenase.